The primary structure comprises 157 residues: MIRLVTLAALPVLVLCQFDPSKWFMGSNLGGLQGFGVLPARCLNYLEAGYSRGNRLPSHRFFFNSTSGNCEQFVYYGRGGNRNNFRDVFKCMKSCGCKQQRNGGVPCNPPSQPVVRYYYDTFTKLCNTFQHTGCGGNSNHFKDWNDCFFTCGNGFET.

An N-terminal signal peptide occupies residues 1 to 16 (MIRLVTLAALPVLVLC). 2 consecutive BPTI/Kunitz inhibitor domains span residues 42–95 (CLNY…MKSC) and 97–151 (CKQQ…FFTC). Disulfide bonds link Cys42/Cys95, Cys70/Cys91, Cys97/Cys151, Cys107/Cys134, and Cys126/Cys147.

As to expression, nacreous layer of shell (at protein level).

It localises to the secreted. The chain is BPTI/Kunitz domain-containing protein 3 from Pinctada maxima (Silver-lipped pearl oyster).